We begin with the raw amino-acid sequence, 934 residues long: Translation initiation factor IF-2 (934 aa).

The tract at residues Ala-54–Ala-323 is disordered. Composition is skewed to low complexity over residues Pro-80–Pro-154, Arg-185–Gly-197, Gly-206–Ala-231, and Arg-238–Pro-250. The span at Gly-260 to Pro-303 shows a compositional bias: gly residues. Over residues Arg-308–Lys-317 the composition is skewed to basic residues. The tr-type G domain occupies Gln-430–Asp-602. A G1 region spans residues Gly-439–Thr-446. Gly-439–Thr-446 contributes to the GTP binding site. Positions Gly-464–His-468 are G2. The G3 stretch occupies residues Asp-489–Gly-492. Residues Asp-489–His-493 and Asn-543–Asp-546 each bind GTP. The interval Asn-543–Asp-546 is G4. The tract at residues Ser-579–Lys-581 is G5.

This sequence belongs to the TRAFAC class translation factor GTPase superfamily. Classic translation factor GTPase family. IF-2 subfamily.

Its subcellular location is the cytoplasm. In terms of biological role, one of the essential components for the initiation of protein synthesis. Protects formylmethionyl-tRNA from spontaneous hydrolysis and promotes its binding to the 30S ribosomal subunits. Also involved in the hydrolysis of GTP during the formation of the 70S ribosomal complex. The sequence is that of Translation initiation factor IF-2 from Corynebacterium urealyticum (strain ATCC 43042 / DSM 7109).